A 370-amino-acid polypeptide reads, in one-letter code: Phosphate acyltransferase (370 aa).

The interval 349-370 (SAGRAGQDAPDEMAAPGRSEKR) is disordered.

The protein belongs to the PlsX family. In terms of assembly, homodimer. Probably interacts with PlsY.

It is found in the cytoplasm. It carries out the reaction a fatty acyl-[ACP] + phosphate = an acyl phosphate + holo-[ACP]. The protein operates within lipid metabolism; phospholipid metabolism. Functionally, catalyzes the reversible formation of acyl-phosphate (acyl-PO(4)) from acyl-[acyl-carrier-protein] (acyl-ACP). This enzyme utilizes acyl-ACP as fatty acyl donor, but not acyl-CoA. This Cereibacter sphaeroides (strain ATCC 17029 / ATH 2.4.9) (Rhodobacter sphaeroides) protein is Phosphate acyltransferase.